The sequence spans 294 residues: Ribosomal RNA small subunit methyltransferase H (294 aa).

S-adenosyl-L-methionine is bound by residues 31–33 (GGY), D49, F76, D97, and Q104.

The protein belongs to the methyltransferase superfamily. RsmH family.

It localises to the cytoplasm. It carries out the reaction cytidine(1402) in 16S rRNA + S-adenosyl-L-methionine = N(4)-methylcytidine(1402) in 16S rRNA + S-adenosyl-L-homocysteine + H(+). Specifically methylates the N4 position of cytidine in position 1402 (C1402) of 16S rRNA. This is Ribosomal RNA small subunit methyltransferase H from Wolbachia pipientis subsp. Culex pipiens (strain wPip).